Reading from the N-terminus, the 91-residue chain is Small ribosomal subunit protein uS7 (91 aa).

This sequence belongs to the universal ribosomal protein uS7 family. In terms of assembly, part of the 30S ribosomal subunit. Contacts proteins S9 and S11.

One of the primary rRNA binding proteins, it binds directly to 16S rRNA where it nucleates assembly of the head domain of the 30S subunit. Is located at the subunit interface close to the decoding center, probably blocks exit of the E-site tRNA. This chain is Small ribosomal subunit protein uS7 (rpsG), found in Apple proliferation phytoplasma.